We begin with the raw amino-acid sequence, 81 residues long: Large ribosomal subunit protein bL27 (81 aa).

Positions 1–22 (MAHKTGQSSSSNGRESKSKRLG) are disordered.

The protein belongs to the bacterial ribosomal protein bL27 family.

The protein is Large ribosomal subunit protein bL27 of Opitutus terrae (strain DSM 11246 / JCM 15787 / PB90-1).